The primary structure comprises 384 residues: Dual-specificity RNA methyltransferase RlmN (384 aa).

The active-site Proton acceptor is Glu105. In terms of domain architecture, Radical SAM core spans 111 to 350 (EDDRATLCVS…TIVRKTRGDD (240 aa)). A disulfide bridge links Cys118 with Cys355. [4Fe-4S] cluster is bound by residues Cys125, Cys129, and Cys132. Residues 179–180 (GE), Ser211, 233–235 (SLH), and Asn312 contribute to the S-adenosyl-L-methionine site. Cys355 (S-methylcysteine intermediate) is an active-site residue.

The protein belongs to the radical SAM superfamily. RlmN family. [4Fe-4S] cluster is required as a cofactor.

The protein localises to the cytoplasm. The catalysed reaction is adenosine(2503) in 23S rRNA + 2 reduced [2Fe-2S]-[ferredoxin] + 2 S-adenosyl-L-methionine = 2-methyladenosine(2503) in 23S rRNA + 5'-deoxyadenosine + L-methionine + 2 oxidized [2Fe-2S]-[ferredoxin] + S-adenosyl-L-homocysteine. The enzyme catalyses adenosine(37) in tRNA + 2 reduced [2Fe-2S]-[ferredoxin] + 2 S-adenosyl-L-methionine = 2-methyladenosine(37) in tRNA + 5'-deoxyadenosine + L-methionine + 2 oxidized [2Fe-2S]-[ferredoxin] + S-adenosyl-L-homocysteine. In terms of biological role, specifically methylates position 2 of adenine 2503 in 23S rRNA and position 2 of adenine 37 in tRNAs. m2A2503 modification seems to play a crucial role in the proofreading step occurring at the peptidyl transferase center and thus would serve to optimize ribosomal fidelity. This is Dual-specificity RNA methyltransferase RlmN from Shigella flexneri serotype 5b (strain 8401).